The primary structure comprises 935 residues: MARWGAARMAACGPWGRNRRVGAGDAFEASEVRRDGRSRMMPACGPWGAGHGGGDPALERELSRDGSHYSISSAILPSLGARSNRRIKLRRFIISPYDRRYRIWETFLIVLVVYSAWVSPFEFGFIPKPTGALATADNVVNAFFAVDIILTFFVAYLDKMSYMLEDDPKKIAWRYSTTWLVLDVASTIPSEFARRILPSKLRSYGFFNMLRLWRLRRVSSLFSRLEKDRHFNYFWVRCAKLICVTLFAVHCAACFYYLLADRYPVPTSTWIGNYMADFHERSLWIRYVTSVYWSITTLTTVGYGDLHAENTREMIFNIFYMLFNLGLTAYLIGNMTNLVVHGTSRTRNYRDTIQAATSFGVRNQLPPRLQDQMISHISLKYRTDSEGLQQQEILDSLPKAIKSSISQYLFFHLVQNVYLFQGVSNDLIFQLVSEMKAEYFPPREDVILQNEAPTDFYILVSGSVELVEQQNGADQVIQVATSGEVVGEIGVLCYRPQLFTVRTRSLCQLLRLNRTAFLSIVQSNVGDGTIIMNNLIQFLKEQKENSVMAGVVKEIESMLARGNLDLPITLCFAVTRGDDFLLHQLLKRGMDPNESDNDGHTALHIAASKGNEQCVRLLLEYGADPNARDSEGKVPLWEALCEKHAAVVQLLVEGGADLSSGDTGLYACIAVEESDTELLNDIIHYGGDVNRARRDGTTALHRAVCDGNVQMAELLLEHGADIDKQDGNGWTPRALAEQQGHDDIQLLFRSRKAATASGHHHVPSSTTTRVAPAAAAASLIGRFNSEPMMKNMIHEDADLPSRVLPEKLRRKRVTFQNSLFGVISSSQAQRETDHPLSRGGLAATGSPNPSSGSRNAVIRVTISCPEKGNTAGKLVLLPQTLDMLLELGAKKFDFAPTKVLTVEGAEVDEVELIRDGDHLVLVSNEWDAEKMKGKS.

The Cytoplasmic portion of the chain corresponds to 1–106 (MARWGAARMA…YDRRYRIWET (106 aa)). The chain crosses the membrane as a helical span at residues 107–127 (FLIVLVVYSAWVSPFEFGFIP). The Extracellular portion of the chain corresponds to 128 to 136 (KPTGALATA). The chain crosses the membrane as a helical span at residues 137–157 (DNVVNAFFAVDIILTFFVAYL). Over 158–178 (DKMSYMLEDDPKKIAWRYSTT) the chain is Cytoplasmic. A helical transmembrane segment spans residues 179-199 (WLVLDVASTIPSEFARRILPS). At 200–205 (KLRSYG) the chain is on the extracellular side. The helical; Voltage-sensor transmembrane segment at 206–226 (FFNMLRLWRLRRVSSLFSRLE) threads the bilayer. At 227–240 (KDRHFNYFWVRCAK) the chain is on the cytoplasmic side. A helical membrane pass occupies residues 241 to 261 (LICVTLFAVHCAACFYYLLAD). At 262–288 (RYPVPTSTWIGNYMADFHERSLWIRYV) the chain is on the extracellular side. Positions 289 to 308 (TSVYWSITTLTTVGYGDLHA) form an intramembrane region, pore-forming. Over 309-312 (ENTR) the chain is Extracellular. A helical transmembrane segment spans residues 313 to 333 (EMIFNIFYMLFNLGLTAYLIG). Residues 334-935 (NMTNLVVHGT…WDAEKMKGKS (602 aa)) lie on the Cytoplasmic side of the membrane. 419–538 (LFQGVSNDLI…TIIMNNLIQF (120 aa)) contacts a nucleoside 3',5'-cyclic phosphate. ANK repeat units follow at residues 565–594 (DLPI…DPNE), 598–627 (DGHT…DPNA), 631–660 (EGKV…DLSS), 662–691 (DTGL…DVNR), 695–724 (DGTT…DIDK), and 728–757 (NGWT…ATAS). Positions 826 to 854 (SQAQRETDHPLSRGGLAATGSPNPSSGSR) are disordered. Polar residues predominate over residues 845 to 854 (GSPNPSSGSR). The KHA domain occupies 859-935 (RVTISCPEKG…WDAEKMKGKS (77 aa)).

The protein belongs to the potassium channel family. Plant (TC 1.A.1.4) subfamily. The potassium channel is probably a homo- or heterotetrameric complex of pore-forming subunits. Expressed in roots and coleoptile of young seedlings.

The protein localises to the membrane. In terms of biological role, highly selective inward-rectifying potassium channel that mediates potassium uptake by plant roots. Assuming opened or closed conformations in response to the voltage difference across the membrane, the channel is activated by hyperpolarization. May be a major salt-sensitive potassium channel in roots. In Oryza sativa subsp. japonica (Rice), this protein is Potassium channel AKT1 (AKT1).